The following is an 815-amino-acid chain: uncharacterized protein (815 aa).

An N-terminal signal peptide occupies residues 1 to 21; that stretch reads MNIYRLSFVSCLVMAMPCAMA. Cys795 and Cys814 are joined by a disulfide.

Belongs to the fimbrial export usher family.

The protein localises to the cell outer membrane. Could be involved in the export and assembly of the putative YbgD fimbrial subunit across the outer membrane. This is an uncharacterized protein from Escherichia coli (strain K12).